A 324-amino-acid chain; its full sequence is Clavaminate synthase 1 (324 aa).

Fe cation is bound by residues His-144, Glu-146, and His-279. Position 293 (Arg-293) interacts with 2-oxoglutarate.

This sequence belongs to the clavaminate synthase family. Fe(2+) serves as cofactor.

The catalysed reaction is deoxyamidinoproclavaminate + 2-oxoglutarate + O2 = amidinoproclavaminate + succinate + CO2. It carries out the reaction proclavaminate + 2-oxoglutarate + O2 = dihydroclavaminate + succinate + CO2 + H2O. The enzyme catalyses dihydroclavaminate + 2-oxoglutarate + O2 = clavaminate + succinate + CO2 + H2O. Its pathway is antibiotic biosynthesis; clavulanate biosynthesis; clavulanate from D-glyceraldehyde 3-phosphate and L-arginine: step 3/8. It functions in the pathway antibiotic biosynthesis; clavulanate biosynthesis; clavulanate from D-glyceraldehyde 3-phosphate and L-arginine: step 5/8. It participates in antibiotic biosynthesis; clavulanate biosynthesis; clavulanate from D-glyceraldehyde 3-phosphate and L-arginine: step 6/8. This is Clavaminate synthase 1 (cs1) from Streptomyces clavuligerus.